Here is an 890-residue protein sequence, read N- to C-terminus: DNA mismatch repair protein MutS (890 aa).

Position 645 to 652 (645 to 652) interacts with ATP; that stretch reads GPNMAGKS.

The protein belongs to the DNA mismatch repair MutS family.

This protein is involved in the repair of mismatches in DNA. It is possible that it carries out the mismatch recognition step. This protein has a weak ATPase activity. The protein is DNA mismatch repair protein MutS of Rickettsia africae (strain ESF-5).